Consider the following 651-residue polypeptide: Acetyl-coenzyme A synthetase (651 aa).

Residues 191-194 (RGGK), threonine 311, and asparagine 335 each bind CoA. Residues 387-389 (GEP), 411-416 (DTWWQT), aspartate 500, and arginine 515 each bind ATP. CoA is bound at residue serine 523. Arginine 526 contributes to the ATP binding site. Residues valine 537, histidine 539, and valine 542 each contribute to the Mg(2+) site. Arginine 584 serves as a coordination point for CoA. N6-acetyllysine is present on lysine 609.

Belongs to the ATP-dependent AMP-binding enzyme family. It depends on Mg(2+) as a cofactor. In terms of processing, acetylated. Deacetylation by the SIR2-homolog deacetylase activates the enzyme.

It carries out the reaction acetate + ATP + CoA = acetyl-CoA + AMP + diphosphate. In terms of biological role, catalyzes the conversion of acetate into acetyl-CoA (AcCoA), an essential intermediate at the junction of anabolic and catabolic pathways. AcsA undergoes a two-step reaction. In the first half reaction, AcsA combines acetate with ATP to form acetyl-adenylate (AcAMP) intermediate. In the second half reaction, it can then transfer the acetyl group from AcAMP to the sulfhydryl group of CoA, forming the product AcCoA. The polypeptide is Acetyl-coenzyme A synthetase (Stutzerimonas stutzeri (strain A1501) (Pseudomonas stutzeri)).